We begin with the raw amino-acid sequence, 1030 residues long: ADAMTS-like protein 4 (1030 aa).

The signal sequence occupies residues 1-24 (MELWLGRLWLYVMLLLLLLQLCQD). The TSP type-1 1 domain occupies 47–91 (GPWGRWASCSQPCGVGVQRRSRTCELHPALSLPPRPPRHPEAPQP). Disordered stretches follow at residues 73–150 (HPAL…KPGM) and 168–306 (LAHK…LPLT). Composition is skewed to polar residues over residues 176–186 (KDSSTAEETLP), 211–237 (QSRSPSAETPRSGTAQTEVPSRTSSAP), and 245–257 (PTSSFRDSRSFQG). Residues asparagine 451 and asparagine 731 are each glycosylated (N-linked (GlcNAc...) asparagine). TSP type-1 domains lie at 681-740 (CPPY…QLRL), 741-800 (CGHW…GPCT), 803-865 (WFYS…GPCE), 866-925 (KTWR…QGQA), and 926-982 (CEDQ…QPCN). The 38-residue stretch at 985-1022 (PDDQCKDSSPHCPLVVQARLCVYPYYTATCCRSCAHVL) folds into the PLAC domain.

In terms of assembly, interacts with CTSB. Interacts with FBN1. In terms of processing, glycosylated. Can be O-fucosylated by POFUT2 on a serine or a threonine residue found within the consensus sequence C1-X(2)-(S/T)-C2-G of the TSP type-1 repeat domains where C1 and C2 are the first and second cysteine residue of the repeat, respectively. Fucosylated repeats can then be further glycosylated by the addition of a beta-1,3-glucose residue by the glucosyltransferase, B3GALTL. Fucosylation mediates the efficient secretion of ADAMTS family members. Can also be C-glycosylated with one or two mannose molecules on tryptophan residues within the consensus sequence W-X-X-W of the TPRs, and N-glycosylated. These other glycosylations can also facilitate secretion.

The protein resides in the secreted. It localises to the extracellular space. The protein localises to the extracellular matrix. Positive regulation of apoptosis. May facilitate FBN1 microfibril biogenesis. The sequence is that of ADAMTS-like protein 4 from Rattus norvegicus (Rat).